The primary structure comprises 258 residues: Snake venom serine protease 3 (258 aa).

Positions 1 to 18 are cleaved as a signal peptide; sequence MVLIRVLANLLILQLSYA. Residues 19-24 constitute a propeptide that is removed on maturation; the sequence is QKSSEL. The Peptidase S1 domain occupies 25–249; sequence IIGGHPCNIN…YTDWIQSIIA (225 aa). Cystine bridges form between C31/C163, C50/C66, C98/C256, C142/C210, C174/C189, and C200/C225. N-linked (GlcNAc...) asparagine glycosylation occurs at N44. Residues H65 and D110 each act as charge relay system in the active site. S204 acts as the Charge relay system in catalysis. N-linked (GlcNAc...) asparagine glycosylation occurs at N239.

It belongs to the peptidase S1 family. Snake venom subfamily. In terms of assembly, monomer. In terms of tissue distribution, expressed by the venom gland.

The protein localises to the secreted. Snake venom serine protease that may act in the hemostasis system of the prey. This Protobothrops jerdonii (Jerdon's pitviper) protein is Snake venom serine protease 3.